The following is a 218-amino-acid chain: Probable transaldolase (218 aa).

The active-site Schiff-base intermediate with substrate is the lysine 87.

The protein belongs to the transaldolase family. Type 3B subfamily.

Its subcellular location is the cytoplasm. The enzyme catalyses D-sedoheptulose 7-phosphate + D-glyceraldehyde 3-phosphate = D-erythrose 4-phosphate + beta-D-fructose 6-phosphate. Its pathway is carbohydrate degradation; pentose phosphate pathway; D-glyceraldehyde 3-phosphate and beta-D-fructose 6-phosphate from D-ribose 5-phosphate and D-xylulose 5-phosphate (non-oxidative stage): step 2/3. Its function is as follows. Transaldolase is important for the balance of metabolites in the pentose-phosphate pathway. The polypeptide is Probable transaldolase (Bacteroides fragilis (strain YCH46)).